An 807-amino-acid chain; its full sequence is Anaphase-promoting complex subunit 4 (807 aa).

Residue Tyr-469 is modified to Phosphotyrosine. The segment at 755-788 is disordered; it reads DESSDDEEEAGGKPVKIKEEVLSESETEAHQDAA. Ser-757 and Ser-758 each carry phosphoserine. Residues 770–785 are compositionally biased toward basic and acidic residues; that stretch reads KIKEEVLSESETEAHQ. Lys-772 is covalently cross-linked (Glycyl lysine isopeptide (Lys-Gly) (interchain with G-Cter in SUMO2)). Residues Ser-777 and Ser-779 each carry the phosphoserine modification. Residue Lys-797 forms a Glycyl lysine isopeptide (Lys-Gly) (interchain with G-Cter in SUMO2) linkage.

This sequence belongs to the APC4 family. In terms of assembly, the mammalian APC/C is composed at least of 14 distinct subunits ANAPC1, ANAPC2, CDC27/APC3, ANAPC4, ANAPC5, CDC16/APC6, ANAPC7, CDC23/APC8, ANAPC10, ANAPC11, CDC26/APC12, ANAPC13, ANAPC15 and ANAPC16 that assemble into a complex of at least 19 chains with a combined molecular mass of around 1.2 MDa; APC/C interacts with FZR1 and FBXO5. In the context of the APC/C complex, directly interacts with UBE2S. Interacts with FBXO43.

Its subcellular location is the nucleus. The protein operates within protein modification; protein ubiquitination. Functionally, component of the anaphase promoting complex/cyclosome (APC/C), a cell cycle-regulated E3 ubiquitin ligase that controls progression through mitosis and the G1 phase of the cell cycle. The APC/C complex acts by mediating ubiquitination and subsequent degradation of target proteins: it mainly mediates the formation of 'Lys-11'-linked polyubiquitin chains and, to a lower extent, the formation of 'Lys-48'- and 'Lys-63'-linked polyubiquitin chains. The APC/C complex catalyzes assembly of branched 'Lys-11'-/'Lys-48'-linked branched ubiquitin chains on target proteins. The polypeptide is Anaphase-promoting complex subunit 4 (Anapc4) (Mus musculus (Mouse)).